Consider the following 1129-residue polypeptide: SMC5-SMC6 complex localization factor protein 2 (1129 aa).

3 disordered regions span residues 71–178 (VKAR…SILN), 312–343 (NTSS…TEQA), and 955–1057 (MLYD…QLEG). Residues 72–87 (KARRHTLPHSSHRRSP) are compositionally biased toward basic residues. The span at 93-110 (LLFQQRPRNSSGQFTHNP) shows a compositional bias: polar residues. Basic and acidic residues-rich tracts occupy residues 112–130 (QKKD…KKEL) and 149–166 (RKSE…RPRV). Polar residues-rich tracts occupy residues 169–178 (QATSSSSILN) and 324–343 (TGRS…TEQA). 2 stretches are compositionally biased toward acidic residues: residues 999–1014 (ESEE…EEDW) and 1033–1048 (SAED…EEES).

The protein belongs to the FAM178 family.

The protein resides in the nucleus. Functionally, plays a role in the DNA damage response (DDR) pathway by regulating postreplication repair of UV-damaged DNA and genomic stability maintenance. Promotes the recruitment of the SMC5-SMC6 complex to DNA lesions. This Danio rerio (Zebrafish) protein is SMC5-SMC6 complex localization factor protein 2 (slf2).